The primary structure comprises 196 residues: Glycerol-3-phosphate acyltransferase (196 aa).

Transmembrane regions (helical) follow at residues 4–24 (IYIA…GLIL), 70–90 (VLIA…LGAF), 111–131 (IGVL…LWLA), and 152–172 (IFLW…LTLL).

The protein belongs to the PlsY family. In terms of assembly, probably interacts with PlsX.

It localises to the cell inner membrane. It catalyses the reaction an acyl phosphate + sn-glycerol 3-phosphate = a 1-acyl-sn-glycero-3-phosphate + phosphate. Its pathway is lipid metabolism; phospholipid metabolism. Functionally, catalyzes the transfer of an acyl group from acyl-phosphate (acyl-PO(4)) to glycerol-3-phosphate (G3P) to form lysophosphatidic acid (LPA). This enzyme utilizes acyl-phosphate as fatty acyl donor, but not acyl-CoA or acyl-ACP. This Rhodopseudomonas palustris (strain BisB5) protein is Glycerol-3-phosphate acyltransferase.